The sequence spans 550 residues: Chaperonin GroEL (550 aa).

ATP-binding positions include 30 to 33 (TLGP), lysine 51, 87 to 91 (DGTTT), glycine 415, 479 to 481 (NAA), and aspartate 495.

It belongs to the chaperonin (HSP60) family. Forms a cylinder of 14 subunits composed of two heptameric rings stacked back-to-back. Interacts with the co-chaperonin GroES.

It is found in the cytoplasm. The catalysed reaction is ATP + H2O + a folded polypeptide = ADP + phosphate + an unfolded polypeptide.. Together with its co-chaperonin GroES, plays an essential role in assisting protein folding. The GroEL-GroES system forms a nano-cage that allows encapsulation of the non-native substrate proteins and provides a physical environment optimized to promote and accelerate protein folding. The sequence is that of Chaperonin GroEL from Marinobacter nauticus (strain ATCC 700491 / DSM 11845 / VT8) (Marinobacter aquaeolei).